We begin with the raw amino-acid sequence, 302 residues long: 1D-myo-inositol 2-acetamido-2-deoxy-alpha-D-glucopyranoside deacetylase (302 aa).

Histidine 13, aspartate 16, and histidine 155 together coordinate Zn(2+).

The protein belongs to the MshB deacetylase family. Requires Zn(2+) as cofactor.

The catalysed reaction is 1D-myo-inositol 2-acetamido-2-deoxy-alpha-D-glucopyranoside + H2O = 1D-myo-inositol 2-amino-2-deoxy-alpha-D-glucopyranoside + acetate. In terms of biological role, catalyzes the deacetylation of 1D-myo-inositol 2-acetamido-2-deoxy-alpha-D-glucopyranoside (GlcNAc-Ins) in the mycothiol biosynthesis pathway. The protein is 1D-myo-inositol 2-acetamido-2-deoxy-alpha-D-glucopyranoside deacetylase of Nocardioides sp. (strain ATCC BAA-499 / JS614).